The sequence spans 387 residues: MEDDAPVIYGLEFQARALTPQTAETDAIRFLVGTQSLKYDNQIHIIDFDDENNIINKNVLLHQVGEIWHISASPADKGVLATCYSKTSDSKVMTCAAVWRMPKELESGSHESPDDSSSNAQTLELLCHLDNTAHGNMAGVLWEPMGDGKKLISLADNHLLLWDLQESSSKAVLSNSAALEGKGQLKFTSGRWSPHHNCTQVATANDTAIRGWDIRTMSQIYCIESAHGQLVRDLDFNPNKQYYLASCGDDCKVKFWDTRNVSDPVKTLEEHSHWVWNVRYNHSHDQLVLTASSDSRVILSNMVSISSEPFGHLVDDEELSDQEDQHQEDKIKEPLQDSIIATYEEHEDSVYAVEWSSADPWLFASLSYDGRLVINRVPRALKYHILL.

5 WD repeats span residues 132–172 (TAHG…SKAV), 182–222 (KGQL…QIYC), 226–266 (AHGQ…DPVK), 270–310 (EHSH…SEPF), and 345–385 (EHED…KYHI).

It belongs to the WD repeat EIPR1 family.

In Gekko japonicus (Schlegel's Japanese gecko), this protein is EARP-interacting protein homolog.